Consider the following 568-residue polypeptide: 2-isopropylmalate synthase (568 aa).

Positions 37–313 (PRWLSTDLRD…DPMIDFSNID (277 aa)) constitute a Pyruvate carboxyltransferase domain. Mg(2+) is bound by residues D46, H252, H254, and N288. Positions 455–568 (EGVVGVMAYR…CSAVNRAQQS (114 aa)) are regulatory domain.

The protein belongs to the alpha-IPM synthase/homocitrate synthase family. LeuA type 2 subfamily. Homodimer. Requires Mg(2+) as cofactor.

The protein localises to the cytoplasm. It catalyses the reaction 3-methyl-2-oxobutanoate + acetyl-CoA + H2O = (2S)-2-isopropylmalate + CoA + H(+). Its pathway is amino-acid biosynthesis; L-leucine biosynthesis; L-leucine from 3-methyl-2-oxobutanoate: step 1/4. Functionally, catalyzes the condensation of the acetyl group of acetyl-CoA with 3-methyl-2-oxobutanoate (2-ketoisovalerate) to form 3-carboxy-3-hydroxy-4-methylpentanoate (2-isopropylmalate). The chain is 2-isopropylmalate synthase from Thermobifida fusca (strain YX).